A 753-amino-acid polypeptide reads, in one-letter code: 5-methyltetrahydropteroyltriglutamate--homocysteine methyltransferase (753 aa).

5-methyltetrahydropteroyltri-L-glutamate is bound by residues 19–22 (RELK) and Arg-113. L-homocysteine-binding positions include 430 to 432 (IGS) and Glu-483. L-methionine-binding positions include 430–432 (IGS) and Glu-483. 5-methyltetrahydropteroyltri-L-glutamate contacts are provided by residues 514–515 (RC) and Trp-560. An L-homocysteine-binding site is contributed by Asp-598. Asp-598 provides a ligand contact to L-methionine. Glu-604 serves as a coordination point for 5-methyltetrahydropteroyltri-L-glutamate. Zn(2+)-binding residues include His-640, Cys-642, and Glu-664. Residue His-693 is the Proton donor of the active site. Cys-725 is a Zn(2+) binding site.

Belongs to the vitamin-B12 independent methionine synthase family. Zn(2+) serves as cofactor.

It catalyses the reaction 5-methyltetrahydropteroyltri-L-glutamate + L-homocysteine = tetrahydropteroyltri-L-glutamate + L-methionine. It functions in the pathway amino-acid biosynthesis; L-methionine biosynthesis via de novo pathway; L-methionine from L-homocysteine (MetE route): step 1/1. Catalyzes the transfer of a methyl group from 5-methyltetrahydrofolate to homocysteine resulting in methionine formation. The chain is 5-methyltetrahydropteroyltriglutamate--homocysteine methyltransferase from Rhodococcus jostii (strain RHA1).